Reading from the N-terminus, the 330-residue chain is Malate dehydrogenase (330 aa).

12-18 (GAAGQIG) serves as a coordination point for NAD(+). Substrate-binding residues include Arg-93 and Arg-99. NAD(+) contacts are provided by residues Asn-106, Gln-113, and 130-132 (VGN). Substrate is bound by residues Asn-132 and Arg-163. The Proton acceptor role is filled by His-188.

This sequence belongs to the LDH/MDH superfamily. MDH type 2 family.

It catalyses the reaction (S)-malate + NAD(+) = oxaloacetate + NADH + H(+). Its function is as follows. Catalyzes the reversible oxidation of malate to oxaloacetate. This Legionella pneumophila subsp. pneumophila (strain Philadelphia 1 / ATCC 33152 / DSM 7513) protein is Malate dehydrogenase.